Consider the following 85-residue polypeptide: Metallothionein-like protein 4B (85 aa).

Residues 1 to 20 form a disordered region; sequence MADTGKGSASASCNDRCGCP.

It belongs to the metallothionein superfamily. Type 15 family. As to expression, expressed specifically in seeds.

It is found in the cytoplasm. The protein resides in the nucleus. Its subcellular location is the cell membrane. In terms of biological role, metallothioneins have a high content of cysteine residues that bind various heavy metals. Functions as a metal chelator of copper (Cu) and zinc (Zn). Plays a role in storing and distributing Zn ion in seed. In Arabidopsis thaliana (Mouse-ear cress), this protein is Metallothionein-like protein 4B (MT4B).